Reading from the N-terminus, the 392-residue chain is Formate-dependent phosphoribosylglycinamide formyltransferase (392 aa).

N(1)-(5-phospho-beta-D-ribosyl)glycinamide contacts are provided by residues 22–23 (EL) and E82. ATP-binding positions include R114, K155, 160–165 (SSGKGQ), 195–198 (EGVV), and E203. The ATP-grasp domain occupies 119–308 (RLAAEELGLP…EFALHVRAFL (190 aa)). 2 residues coordinate Mg(2+): E267 and E279. N(1)-(5-phospho-beta-D-ribosyl)glycinamide-binding positions include D286, K355, and 362 to 363 (RR).

It belongs to the PurK/PurT family. As to quaternary structure, homodimer.

It catalyses the reaction N(1)-(5-phospho-beta-D-ribosyl)glycinamide + formate + ATP = N(2)-formyl-N(1)-(5-phospho-beta-D-ribosyl)glycinamide + ADP + phosphate + H(+). It functions in the pathway purine metabolism; IMP biosynthesis via de novo pathway; N(2)-formyl-N(1)-(5-phospho-D-ribosyl)glycinamide from N(1)-(5-phospho-D-ribosyl)glycinamide (formate route): step 1/1. Its function is as follows. Involved in the de novo purine biosynthesis. Catalyzes the transfer of formate to 5-phospho-ribosyl-glycinamide (GAR), producing 5-phospho-ribosyl-N-formylglycinamide (FGAR). Formate is provided by PurU via hydrolysis of 10-formyl-tetrahydrofolate. The polypeptide is Formate-dependent phosphoribosylglycinamide formyltransferase (Salmonella choleraesuis (strain SC-B67)).